A 238-amino-acid polypeptide reads, in one-letter code: MNQQQFVTALAEQGLEVSDHQLQQFRKYYELLVEWNEKMNLTAITDEEGVYLKHFYDSITAAFYFDFTKVETVCDVGAGAGFPSLPIKIMFPHLKVTIIDSLNKRIGFLNMLATELGLEGVAFHHGRAEEFGKNKQFREHFDVVTARAVARMSVLAEYCLPLARVGGQFVALKAAKLGEELEEGATALKVLGGNLRESFQFQLPGEESERNIVIVDKKRLTPGKYPRKAGTPAKDPLG.

S-adenosyl-L-methionine is bound by residues Gly-77, Phe-82, 128-129, and Arg-147; that span reads AE.

This sequence belongs to the methyltransferase superfamily. RNA methyltransferase RsmG family.

Its subcellular location is the cytoplasm. Functionally, specifically methylates the N7 position of guanine in position 535 of 16S rRNA. This is Ribosomal RNA small subunit methyltransferase G from Exiguobacterium sibiricum (strain DSM 17290 / CCUG 55495 / CIP 109462 / JCM 13490 / 255-15).